The primary structure comprises 226 residues: Putative N-acetylmannosamine-6-phosphate 2-epimerase 1 (226 aa).

This sequence belongs to the NanE family.

It carries out the reaction an N-acyl-D-glucosamine 6-phosphate = an N-acyl-D-mannosamine 6-phosphate. Its pathway is amino-sugar metabolism; N-acetylneuraminate degradation; D-fructose 6-phosphate from N-acetylneuraminate: step 3/5. Converts N-acetylmannosamine-6-phosphate (ManNAc-6-P) to N-acetylglucosamine-6-phosphate (GlcNAc-6-P). This chain is Putative N-acetylmannosamine-6-phosphate 2-epimerase 1, found in Salmonella paratyphi A (strain ATCC 9150 / SARB42).